The primary structure comprises 555 residues: Beta-fructofuranosidase, cell wall isozyme (555 aa).

The N-terminal stretch at 1-22 (MAISSIFLLSLFSLIYVIPIEA) is a signal peptide. Substrate is bound by residues 58 to 61 (WIND), Gln-77, Trp-85, and 120 to 121 (WS). Asp-61 is an active-site residue. Asp-140 is an active-site residue. Residues Asn-154 and Asn-181 are each glycosylated (N-linked (GlcNAc...) asparagine). Substrate contacts are provided by residues 186 to 187 (RD), Glu-241, and Asp-277. N-linked (GlcNAc...) asparagine glycosylation occurs at Asn-337. Cys-435 and Cys-481 are oxidised to a cystine.

It belongs to the glycosyl hydrolase 32 family.

The enzyme catalyses Hydrolysis of terminal non-reducing beta-D-fructofuranoside residues in beta-D-fructofuranosides.. This chain is Beta-fructofuranosidase, cell wall isozyme (BFRUCT1), found in Pisum sativum (Garden pea).